The chain runs to 1609 residues: Probable outer membrane protein pmp21 (1609 aa).

Residues 1-30 form the signal peptide; it reads MVAKKTVRSYRSSFSHSVIVAILSAGIAFE. Positions 132–145 are enriched in polar residues; that stretch reads FSQPTQEPDTSNAV. 2 disordered regions span residues 132–183 and 640–677; these read FSQP…KSPE and TAPVESDASSTNKDEKSLNACSHGDHYPPKTVEEEVPP. Composition is skewed to basic and acidic residues over residues 149–175 and 651–672; these read ISSDTKENRKDLETEDPSKKSGLKEVS and NKDEKSLNACSHGDHYPPKTVE. The 282-residue stretch at 1328-1609 folds into the Autotransporter domain; that stretch reads ELDFSTNVWG…DFNGGIRIIF (282 aa).

The protein belongs to the PMP outer membrane protein family.

Its subcellular location is the secreted. The protein resides in the cell wall. It localises to the cell outer membrane. The protein is Probable outer membrane protein pmp21 (pmp21) of Chlamydia pneumoniae (Chlamydophila pneumoniae).